The sequence spans 148 residues: F420H(2)-dependent quinone reductase MT1609 (148 aa).

Coenzyme F420-(gamma-Glu)n is bound by residues 46–48 (AKT), 52–57 (RKTPLM), 68–71 (VASL), 79–83 (VWYHN), and Tyr125.

This sequence belongs to the F420H(2)-dependent quinone reductase family.

It localises to the cell membrane. It catalyses the reaction oxidized coenzyme F420-(gamma-L-Glu)(n) + a quinol + H(+) = reduced coenzyme F420-(gamma-L-Glu)(n) + a quinone. In terms of biological role, involved in a F420-dependent anti-oxidant mechanism that protects M.tuberculosis against oxidative stress and bactericidal agents. Catalyzes the F420H(2)-dependent two-electron reduction of quinones to dihydroquinones, thereby preventing the formation of cytotoxic semiquinones obtained by the one-electron reduction pathway. In vitro, catalyzes the reduction of menadione to menadiol; since menaquinone is the sole quinone electron carrier in the respiratory chain in M.tuberculosis, the physiological electron acceptor for Fqr-mediated F420H(2) oxidation is therefore likely to be the endogenous menaquinone found in the membrane fraction of M.tuberculosis. The protein is F420H(2)-dependent quinone reductase MT1609 of Mycobacterium tuberculosis (strain CDC 1551 / Oshkosh).